A 507-amino-acid polypeptide reads, in one-letter code: ATP synthase subunit alpha, chloroplastic (507 aa).

170–177 (GDRQTGKT) serves as a coordination point for ATP. T257 carries the phosphothreonine modification.

Belongs to the ATPase alpha/beta chains family. In terms of assembly, F-type ATPases have 2 components, CF(1) - the catalytic core - and CF(0) - the membrane proton channel. CF(1) has five subunits: alpha(3), beta(3), gamma(1), delta(1), epsilon(1). CF(0) has four main subunits: a, b, b' and c.

The protein localises to the plastid. The protein resides in the chloroplast thylakoid membrane. It carries out the reaction ATP + H2O + 4 H(+)(in) = ADP + phosphate + 5 H(+)(out). Functionally, produces ATP from ADP in the presence of a proton gradient across the membrane. The alpha chain is a regulatory subunit. In Aethionema cordifolium (Lebanon stonecress), this protein is ATP synthase subunit alpha, chloroplastic.